The primary structure comprises 231 residues: Small ribosomal subunit protein uS3 (231 aa).

Residues 39-107 (IRKFLKAKLY…DVTINIKEER (69 aa)) enclose the KH type-2 domain.

The protein belongs to the universal ribosomal protein uS3 family. In terms of assembly, part of the 30S ribosomal subunit. Forms a tight complex with proteins S10 and S14.

Functionally, binds the lower part of the 30S subunit head. Binds mRNA in the 70S ribosome, positioning it for translation. The sequence is that of Small ribosomal subunit protein uS3 from Campylobacter hominis (strain ATCC BAA-381 / DSM 21671 / CCUG 45161 / LMG 19568 / NCTC 13146 / CH001A).